An 884-amino-acid chain; its full sequence is Alanine--tRNA ligase (884 aa).

Residues histidine 565, histidine 569, cysteine 675, and histidine 679 each coordinate Zn(2+).

This sequence belongs to the class-II aminoacyl-tRNA synthetase family. Zn(2+) is required as a cofactor.

The protein resides in the cytoplasm. It carries out the reaction tRNA(Ala) + L-alanine + ATP = L-alanyl-tRNA(Ala) + AMP + diphosphate. Catalyzes the attachment of alanine to tRNA(Ala) in a two-step reaction: alanine is first activated by ATP to form Ala-AMP and then transferred to the acceptor end of tRNA(Ala). Also edits incorrectly charged Ser-tRNA(Ala) and Gly-tRNA(Ala) via its editing domain. The protein is Alanine--tRNA ligase of Maricaulis maris (strain MCS10) (Caulobacter maris).